Consider the following 172-residue polypeptide: Crossover junction endodeoxyribonuclease RuvC (172 aa).

Active-site residues include aspartate 12, glutamate 71, and aspartate 143. Mg(2+) is bound by residues aspartate 12, glutamate 71, and aspartate 143.

The protein belongs to the RuvC family. Homodimer which binds Holliday junction (HJ) DNA. The HJ becomes 2-fold symmetrical on binding to RuvC with unstacked arms; it has a different conformation from HJ DNA in complex with RuvA. In the full resolvosome a probable DNA-RuvA(4)-RuvB(12)-RuvC(2) complex forms which resolves the HJ. It depends on Mg(2+) as a cofactor.

Its subcellular location is the cytoplasm. It catalyses the reaction Endonucleolytic cleavage at a junction such as a reciprocal single-stranded crossover between two homologous DNA duplexes (Holliday junction).. Its function is as follows. The RuvA-RuvB-RuvC complex processes Holliday junction (HJ) DNA during genetic recombination and DNA repair. Endonuclease that resolves HJ intermediates. Cleaves cruciform DNA by making single-stranded nicks across the HJ at symmetrical positions within the homologous arms, yielding a 5'-phosphate and a 3'-hydroxyl group; requires a central core of homology in the junction. The consensus cleavage sequence is 5'-(A/T)TT(C/G)-3'. Cleavage occurs on the 3'-side of the TT dinucleotide at the point of strand exchange. HJ branch migration catalyzed by RuvA-RuvB allows RuvC to scan DNA until it finds its consensus sequence, where it cleaves and resolves the cruciform DNA. This chain is Crossover junction endodeoxyribonuclease RuvC, found in Coxiella burnetii (strain CbuK_Q154) (Coxiella burnetii (strain Q154)).